The following is a 170-amino-acid chain: Class I hydrophobin E (170 aa).

The signal sequence occupies residues 1–19 (MQLTTLLTGLISVLSVTTA). Disulfide bonds link cysteine 62–cysteine 126, cysteine 70–cysteine 117, cysteine 71–cysteine 105, and cysteine 127–cysteine 139.

It belongs to the fungal hydrophobin family.

It is found in the secreted. The protein localises to the cell wall. Functionally, aerial growth, conidiation, and dispersal of filamentous fungi in the environment rely upon a capability of their secreting small amphipathic proteins called hydrophobins (HPBs) with low sequence identity. Class I can self-assemble into an outermost layer of rodlet bundles on aerial cell surfaces, conferring cellular hydrophobicity that supports fungal growth, development and dispersal; whereas Class II form highly ordered films at water-air interfaces through intermolecular interactions but contribute nothing to the rodlet structure. In P.expansum, hydrophobins contribute to germination, tolerance to cold stress and mycotoxins patulin and citrinin production. This is Class I hydrophobin E from Penicillium expansum (Blue mold rot fungus).